Here is a 166-residue protein sequence, read N- to C-terminus: uncharacterized protein (166 aa).

The next 3 helical transmembrane spans lie at 4 to 24 (LNIFPCGLFSYIALLCLEASI), 101 to 121 (LITCSGAMVFLASLSAISEAI), and 146 to 166 (SWSSISDIIFCTVAKIIQCFL).

The protein localises to the membrane. This is an uncharacterized protein from Saccharomyces cerevisiae (strain ATCC 204508 / S288c) (Baker's yeast).